A 232-amino-acid polypeptide reads, in one-letter code: Glycerol-3-phosphate acyltransferase 4 (232 aa).

The next 6 membrane-spanning stretches (helical) occupy residues 4 to 24, 54 to 76, 80 to 99, 107 to 127, 143 to 163, and 168 to 188; these read VFLIMIPAGYLVGAIPMAYLL, LGLAVFVFDVSKGAIIILLAGWL, LWQQIVVGLLTIAGHNWPVF, GIATSLGVALVMAPVPALIAL, VFLGVGALPVMSGYFHGFFGV, and TVTWGFAGLFLIMIVRRLMAP.

It belongs to the PlsY family. As to quaternary structure, probably interacts with PlsX.

It is found in the cell membrane. The enzyme catalyses an acyl phosphate + sn-glycerol 3-phosphate = a 1-acyl-sn-glycero-3-phosphate + phosphate. Its pathway is lipid metabolism; phospholipid metabolism. Its function is as follows. Catalyzes the transfer of an acyl group from acyl-phosphate (acyl-PO(4)) to glycerol-3-phosphate (G3P) to form lysophosphatidic acid (LPA). This enzyme utilizes acyl-phosphate as fatty acyl donor, but not acyl-CoA or acyl-ACP. In Dehalococcoides mccartyi (strain CBDB1), this protein is Glycerol-3-phosphate acyltransferase 4.